Reading from the N-terminus, the 259-residue chain is Adenosylcobinamide-GDP ribazoletransferase (259 aa).

Helical transmembrane passes span N9–V29, L43–V63, S64–H84, A118–F138, V143–F163, and I190–L210.

Belongs to the CobS family. It depends on Mg(2+) as a cofactor.

Its subcellular location is the cell inner membrane. It carries out the reaction alpha-ribazole + adenosylcob(III)inamide-GDP = adenosylcob(III)alamin + GMP + H(+). The catalysed reaction is alpha-ribazole 5'-phosphate + adenosylcob(III)inamide-GDP = adenosylcob(III)alamin 5'-phosphate + GMP + H(+). It participates in cofactor biosynthesis; adenosylcobalamin biosynthesis; adenosylcobalamin from cob(II)yrinate a,c-diamide: step 7/7. Functionally, joins adenosylcobinamide-GDP and alpha-ribazole to generate adenosylcobalamin (Ado-cobalamin). Also synthesizes adenosylcobalamin 5'-phosphate from adenosylcobinamide-GDP and alpha-ribazole 5'-phosphate. This chain is Adenosylcobinamide-GDP ribazoletransferase, found in Shewanella pealeana (strain ATCC 700345 / ANG-SQ1).